A 370-amino-acid polypeptide reads, in one-letter code: Quinolinate synthase (370 aa).

Iminosuccinate-binding residues include His-62 and Ser-83. Cys-128 serves as a coordination point for [4Fe-4S] cluster. Iminosuccinate is bound by residues Tyr-154–Asn-156 and Ser-171. Cys-215 provides a ligand contact to [4Fe-4S] cluster. Iminosuccinate contacts are provided by residues His-241–Glu-243 and Thr-258. Cys-312 provides a ligand contact to [4Fe-4S] cluster.

This sequence belongs to the quinolinate synthase family. Type 1 subfamily. It depends on [4Fe-4S] cluster as a cofactor.

Its subcellular location is the cytoplasm. The enzyme catalyses iminosuccinate + dihydroxyacetone phosphate = quinolinate + phosphate + 2 H2O + H(+). It functions in the pathway cofactor biosynthesis; NAD(+) biosynthesis; quinolinate from iminoaspartate: step 1/1. Functionally, catalyzes the condensation of iminoaspartate with dihydroxyacetone phosphate to form quinolinate. The chain is Quinolinate synthase from Neisseria gonorrhoeae (strain ATCC 700825 / FA 1090).